Consider the following 439-residue polypeptide: Proton pump-interactor 4 (439 aa).

Residues 286-354 (KEEKEIDEET…AKKKKAVCKS (69 aa)) are a coiled coil. The helical transmembrane segment at 415–435 (LWVWTVSSAAVALPLALLVVF) threads the bilayer.

This sequence belongs to the plant Proton pump-interactor protein family.

It is found in the cell membrane. The protein localises to the endoplasmic reticulum membrane. Functionally, may regulate plasma membrane ATPase activity. This chain is Proton pump-interactor 4 (PPI4), found in Arabidopsis thaliana (Mouse-ear cress).